Consider the following 701-residue polypeptide: C6 finger domain transcription factor nscR (701 aa).

The zn(2)-C6 fungal-type DNA-binding region spans 17 to 43 (CELCRERKVKCDKLDPCTNCASAGVVC).

The protein resides in the nucleus. Its function is as follows. Transcription factor that specifically regulates the neosartoricin B biosynthesis gene cluster. This chain is C6 finger domain transcription factor nscR, found in Arthroderma gypseum (strain ATCC MYA-4604 / CBS 118893) (Microsporum gypseum).